We begin with the raw amino-acid sequence, 256 residues long: Acetoacetate decarboxylase 3 (256 aa).

Lysine 110 serves as the catalytic Schiff-base intermediate with acetoacetate.

The protein belongs to the ADC family.

It catalyses the reaction acetoacetate + H(+) = acetone + CO2. Catalyzes the conversion of acetoacetate to acetone and carbon dioxide. The protein is Acetoacetate decarboxylase 3 of Mesorhizobium japonicum (strain LMG 29417 / CECT 9101 / MAFF 303099) (Mesorhizobium loti (strain MAFF 303099)).